We begin with the raw amino-acid sequence, 284 residues long: D-tagatose-1,6-bisphosphate aldolase subunit GatY (284 aa).

D82 (proton donor) is an active-site residue. 2 residues coordinate Zn(2+): H83 and H180. G181 lines the dihydroxyacetone phosphate pocket. Residue H208 participates in Zn(2+) binding. Residues 209-211 (GAS) and 230-233 (NVAT) each bind dihydroxyacetone phosphate.

It belongs to the class II fructose-bisphosphate aldolase family. TagBP aldolase GatY subfamily. Forms a complex with GatZ. The cofactor is Zn(2+).

The enzyme catalyses D-tagatofuranose 1,6-bisphosphate = D-glyceraldehyde 3-phosphate + dihydroxyacetone phosphate. Its pathway is carbohydrate metabolism; D-tagatose 6-phosphate degradation; D-glyceraldehyde 3-phosphate and glycerone phosphate from D-tagatose 6-phosphate: step 2/2. Its function is as follows. Catalytic subunit of the tagatose-1,6-bisphosphate aldolase GatYZ, which catalyzes the reversible aldol condensation of dihydroxyacetone phosphate (DHAP or glycerone-phosphate) with glyceraldehyde 3-phosphate (G3P) to produce tagatose 1,6-bisphosphate (TBP). Requires GatZ subunit for full activity and stability. Is involved in the catabolism of galactitol. This chain is D-tagatose-1,6-bisphosphate aldolase subunit GatY, found in Shigella dysenteriae serotype 1 (strain Sd197).